We begin with the raw amino-acid sequence, 486 residues long: Maintenance of mitochondrial morphology protein 1 (486 aa).

The Lumenal segment spans residues methionine 1 to glycine 23. A helical transmembrane segment spans residues phenylalanine 24–phenylalanine 44. Topologically, residues glycine 45–glutamine 486 are cytoplasmic. The tract at residues serine 52 to serine 103 is disordered. Over residues serine 67–serine 84 the composition is skewed to low complexity. A compositionally biased stretch (polar residues) spans proline 92 to serine 103. The SMP-LTD domain occupies glutamine 140–proline 389. The segment covering alanine 413–alanine 426 has biased composition (low complexity). The disordered stretch occupies residues alanine 413–glutamine 486.

It belongs to the MMM1 family. As to quaternary structure, homodimer. Component of the ER-mitochondria encounter structure (ERMES) or MDM complex, composed of mmm1, mdm10, mdm12 and mdm34. A mmm1 homodimer associates with one molecule of mdm12 on each side in a pairwise head-to-tail manner, and the SMP-LTD domains of mmm1 and mdm12 generate a continuous hydrophobic tunnel for phospholipid trafficking.

The protein localises to the endoplasmic reticulum membrane. Its function is as follows. Component of the ERMES/MDM complex, which serves as a molecular tether to connect the endoplasmic reticulum (ER) and mitochondria. Components of this complex are involved in the control of mitochondrial shape and protein biogenesis, and function in nonvesicular lipid trafficking between the ER and mitochondria. The mdm12-mmm1 subcomplex functions in the major beta-barrel assembly pathway that is responsible for biogenesis of all outer membrane beta-barrel proteins, and acts in a late step after the SAM complex. The mdm10-mdm12-mmm1 subcomplex further acts in the TOM40-specific pathway after the action of the mdm12-mmm1 complex. Essential for establishing and maintaining the structure of mitochondria and maintenance of mtDNA nucleoids. This Talaromyces marneffei (strain ATCC 18224 / CBS 334.59 / QM 7333) (Penicillium marneffei) protein is Maintenance of mitochondrial morphology protein 1.